The primary structure comprises 264 residues: MKQYLDFLRLVKNTGTNKTDRTGIGTTSLFGYQMRFDLSDGFPLITTKRVHLPSVVHELLWFLSGATNIKYLQENGVRIWNEWADKNGDLGPIYGVQWRNWQNVRGESIDQIMQVIEQIKNTPDSRRIIVSAWNVGELENMALPPCHAFFQFYVALGKLSCQLYQRSADVFLGVPFNIASYALLTHMMAQQCDLEVGDFIWSGGDCHIYSNHTKQVEIQLARTPKTLATLKINNKPDSIFDYNFEDFEFINYVFDAYIKATVAI.

Arg21 serves as a coordination point for dUMP. His51 serves as a coordination point for (6R)-5,10-methylene-5,6,7,8-tetrahydrofolate. 126–127 (RR) serves as a coordination point for dUMP. The active-site Nucleophile is Cys146. DUMP contacts are provided by residues 166–169 (RSAD), Asn177, and 207–209 (HIY). Asp169 provides a ligand contact to (6R)-5,10-methylene-5,6,7,8-tetrahydrofolate. Ala263 is a (6R)-5,10-methylene-5,6,7,8-tetrahydrofolate binding site.

It belongs to the thymidylate synthase family. Bacterial-type ThyA subfamily. As to quaternary structure, homodimer.

Its subcellular location is the cytoplasm. It carries out the reaction dUMP + (6R)-5,10-methylene-5,6,7,8-tetrahydrofolate = 7,8-dihydrofolate + dTMP. It functions in the pathway pyrimidine metabolism; dTTP biosynthesis. Catalyzes the reductive methylation of 2'-deoxyuridine-5'-monophosphate (dUMP) to 2'-deoxythymidine-5'-monophosphate (dTMP) while utilizing 5,10-methylenetetrahydrofolate (mTHF) as the methyl donor and reductant in the reaction, yielding dihydrofolate (DHF) as a by-product. This enzymatic reaction provides an intracellular de novo source of dTMP, an essential precursor for DNA biosynthesis. The chain is Thymidylate synthase from Ruthia magnifica subsp. Calyptogena magnifica.